The following is a 266-amino-acid chain: Proline-rich protein 23A (266 aa).

Positions 1–18 are enriched in low complexity; it reads MGSRPRSPSAFPAPWWGQ. Disordered regions lie at residues 1–47 and 197–266; these read MGSR…SLED and EPCA…LFQE. The segment covering 227 to 238 has biased composition (pro residues); that stretch reads PSSPLQPLPPSP. The segment covering 255-266 has biased composition (basic residues); it reads PPCKARRRLFQE.

Belongs to the PRR23 family.

This is Proline-rich protein 23A (PRR23A) from Homo sapiens (Human).